The sequence spans 89 residues: Small ribosomal subunit protein uS15 (89 aa).

Belongs to the universal ribosomal protein uS15 family. Part of the 30S ribosomal subunit. Forms a bridge to the 50S subunit in the 70S ribosome, contacting the 23S rRNA.

Its function is as follows. One of the primary rRNA binding proteins, it binds directly to 16S rRNA where it helps nucleate assembly of the platform of the 30S subunit by binding and bridging several RNA helices of the 16S rRNA. Functionally, forms an intersubunit bridge (bridge B4) with the 23S rRNA of the 50S subunit in the ribosome. This Gluconacetobacter diazotrophicus (strain ATCC 49037 / DSM 5601 / CCUG 37298 / CIP 103539 / LMG 7603 / PAl5) protein is Small ribosomal subunit protein uS15.